Consider the following 574-residue polypeptide: ATP-grasp enzyme fsqD (574 aa).

The 229-residue stretch at 234-462 (NKFLTSKYVG…YWGLAAVLGV (229 aa)) folds into the ATP-grasp domain. 263–318 (ALPYPLIVKPCDGWSSEGVSRVESPDAFPAAVKSIDTSRHGTEFVMEPYCDGPEVD) is an ATP binding site. The Mg(2+) site is built by Glu-394, Glu-431, and Asn-433. Residues Glu-394, Glu-431, and Asn-433 each coordinate Mn(2+).

Mg(2+) serves as cofactor. Requires Mn(2+) as cofactor.

It participates in secondary metabolite biosynthesis. ATP-grasp enzyme; part of the gene cluster that mediates the biosynthesis of the isoquinoline alkaloids fumisoquin A, fumisoquin B and fumisoquin C; as well as small amounts of fumipyrrole as a shunt metabolite. The products of the cluster lead to a brown coloration and are important for growth and conidiation. The nonribosomal peptide synthetase-like protein fsqF, which lacks a canonical condensation domain, is required for addition of a serine-derived dehydroalanine moiety to activated tyrosine but is not essential for the subsequent steps leading to isoquinoline formation. A different enzyme, most likely the ATP-grasp enzyme fsqD, is responsible for activation of tyrosine. Three additional enzymes encoded by the fsq cluster, the N-methyltransferase fsqC, the phenol 2-monooxygenase fsqG and the FAD-dependent oxidase fsqB, catalyze the formation of the isoquinoline ring system in the fumisoquins. FsqB converts the fspF thiolation domain-bound (2S,4S,5S)-2-amino-6-(3,4-dihydroxyphenyl)-4-hydroxy-5-(methylamino)hexanoyl into isoquinoline. The cyclization most likely proceeds via a two-step mechanism, beginning with FAD-dependent oxidation of the methyl group to an iminium species followed by electrophilic attack on the deprotonated phenol. The sequence is that of ATP-grasp enzyme fsqD from Aspergillus fumigatus (strain ATCC MYA-4609 / CBS 101355 / FGSC A1100 / Af293) (Neosartorya fumigata).